The following is a 97-amino-acid chain: Putative pterin-4-alpha-carbinolamine dehydratase (97 aa).

This sequence belongs to the pterin-4-alpha-carbinolamine dehydratase family.

It carries out the reaction (4aS,6R)-4a-hydroxy-L-erythro-5,6,7,8-tetrahydrobiopterin = (6R)-L-erythro-6,7-dihydrobiopterin + H2O. This is Putative pterin-4-alpha-carbinolamine dehydratase from Saccharolobus solfataricus (strain ATCC 35092 / DSM 1617 / JCM 11322 / P2) (Sulfolobus solfataricus).